The primary structure comprises 434 residues: Beta-enolase (434 aa).

Ala-2 carries the N-acetylalanine modification. Phosphothreonine is present on Thr-72. 2 positions are modified to phosphoserine: Ser-83 and Ser-157. The substrate site is built by His-158 and Glu-167. The residue at position 176 (Ser-176) is a Phosphoserine. Residue Thr-205 is modified to Phosphothreonine. The active-site Proton donor is Glu-210. A Phosphothreonine modification is found at Thr-229. Residue Tyr-236 is modified to Phosphotyrosine. Asp-245 provides a ligand contact to Mg(2+). The residue at position 263 (Ser-263) is a Phosphoserine. Substrate-binding residues include Glu-293 and Asp-318. Positions 293 and 318 each coordinate Mg(2+). Lys-343 serves as the catalytic Proton acceptor. Substrate contacts are provided by residues Ser-370–Ser-373 and Lys-394.

This sequence belongs to the enolase family. In terms of assembly, mammalian enolase is composed of 3 isozyme subunits, alpha, beta and gamma, which can form homodimers or heterodimers which are cell-type and development-specific. In vitro, interacts with several glycolytic enzymes including PKM, PGM, CKM and ALDO. Also binds PLG and troponin, in vitro. Interacts with PNKD. Mg(2+) serves as cofactor. As to expression, brain (at protein level). The alpha/alpha homodimer is expressed in embryo and in most adult tissues. The alpha/beta heterodimer and the beta/beta homodimer are found in striated muscle, and the alpha/gamma heterodimer and the gamma/gamma homodimer in neurons. In striated muscle, the fiber-type order of ENO3 expression is IIB &gt; IIX &gt; IIA &gt; I.

Its subcellular location is the cytoplasm. It catalyses the reaction (2R)-2-phosphoglycerate = phosphoenolpyruvate + H2O. The protein operates within carbohydrate degradation; glycolysis; pyruvate from D-glyceraldehyde 3-phosphate: step 4/5. Its function is as follows. Glycolytic enzyme that catalyzes the conversion of 2-phosphoglycerate to phosphoenolpyruvate. Appears to have a function in striated muscle development and regeneration. This Mus musculus (Mouse) protein is Beta-enolase (Eno3).